Consider the following 669-residue polypeptide: Probable L-type lectin-domain containing receptor kinase I.2 (669 aa).

An N-terminal signal peptide occupies residues 1–24 (MAQRFYLLLLLLIFLVNLICFSSQ). Residues 25–295 (QDLSFVFNGF…FTEQKRKRSP (271 aa)) lie on the Extracellular side of the membrane. The tract at residues 26–266 (DLSFVFNGFN…NQYILGWSFS (241 aa)) is legume-lectin like. N-linked (GlcNAc...) asparagine glycosylation is found at asparagine 132, asparagine 189, asparagine 212, and asparagine 233. Residues 296-316 (LLIVLLVILTLVVIGGLGGYY) traverse the membrane as a helical segment. Residues 317-669 (LYRRKKYAEV…SHTILNGDGR (353 aa)) lie on the Cytoplasmic side of the membrane. The 259-residue stretch at 351–609 (FNKDGRLGKG…MQYINRDQAL (259 aa)) folds into the Protein kinase domain. ATP-binding positions include 357–365 (LGKGGFGEV) and lysine 379. The active-site Proton acceptor is aspartate 475.

It in the C-terminal section; belongs to the protein kinase superfamily. Ser/Thr protein kinase family. In the N-terminal section; belongs to the leguminous lectin family.

Its subcellular location is the cell membrane. It catalyses the reaction L-seryl-[protein] + ATP = O-phospho-L-seryl-[protein] + ADP + H(+). The catalysed reaction is L-threonyl-[protein] + ATP = O-phospho-L-threonyl-[protein] + ADP + H(+). Involved in resistance response to the pathogenic fungus Alternaria brassicicola. The protein is Probable L-type lectin-domain containing receptor kinase I.2 of Arabidopsis thaliana (Mouse-ear cress).